The chain runs to 430 residues: Adenylosuccinate synthetase (430 aa).

GTP contacts are provided by residues 12-18 (GDEGKGK) and 40-42 (GHT). Aspartate 13 functions as the Proton acceptor in the catalytic mechanism. Mg(2+) contacts are provided by aspartate 13 and glycine 40. IMP-binding positions include 13–16 (DEGK), 38–41 (NAGH), threonine 128, arginine 142, glutamine 223, threonine 238, and arginine 302. Catalysis depends on histidine 41, which acts as the Proton donor. 298-304 (TTTGRPR) is a substrate binding site. Residues arginine 304, 330-332 (SID), and 412-414 (SVG) contribute to the GTP site.

This sequence belongs to the adenylosuccinate synthetase family. Homodimer. Mg(2+) serves as cofactor.

Its subcellular location is the cytoplasm. The catalysed reaction is IMP + L-aspartate + GTP = N(6)-(1,2-dicarboxyethyl)-AMP + GDP + phosphate + 2 H(+). Its pathway is purine metabolism; AMP biosynthesis via de novo pathway; AMP from IMP: step 1/2. Functionally, plays an important role in the de novo pathway of purine nucleotide biosynthesis. Catalyzes the first committed step in the biosynthesis of AMP from IMP. The chain is Adenylosuccinate synthetase from Streptococcus pyogenes serotype M49 (strain NZ131).